Consider the following 188-residue polypeptide: Protein GrpE (188 aa).

The segment at 1 to 22 is disordered; sequence MADEQTLDTQNLDANQAPEASG.

It belongs to the GrpE family. As to quaternary structure, homodimer.

The protein resides in the cytoplasm. Its function is as follows. Participates actively in the response to hyperosmotic and heat shock by preventing the aggregation of stress-denatured proteins, in association with DnaK and GrpE. It is the nucleotide exchange factor for DnaK and may function as a thermosensor. Unfolded proteins bind initially to DnaJ; upon interaction with the DnaJ-bound protein, DnaK hydrolyzes its bound ATP, resulting in the formation of a stable complex. GrpE releases ADP from DnaK; ATP binding to DnaK triggers the release of the substrate protein, thus completing the reaction cycle. Several rounds of ATP-dependent interactions between DnaJ, DnaK and GrpE are required for fully efficient folding. The chain is Protein GrpE from Pseudomonas fluorescens (strain ATCC BAA-477 / NRRL B-23932 / Pf-5).